A 153-amino-acid polypeptide reads, in one-letter code: Ribosome maturation factor RimP (153 aa).

The protein belongs to the RimP family.

It localises to the cytoplasm. Its function is as follows. Required for maturation of 30S ribosomal subunits. The chain is Ribosome maturation factor RimP from Christiangramia forsetii (strain DSM 17595 / CGMCC 1.15422 / KT0803) (Gramella forsetii).